Here is a 546-residue protein sequence, read N- to C-terminus: Pyrophosphate--fructose 6-phosphate 1-phosphotransferase (546 aa).

A diphosphate-binding site is contributed by Gly-80. Asp-174 provides a ligand contact to Mg(2+). Residues 202 to 204 (TID), 241 to 242 (KY), 249 to 251 (MGR), Glu-310, and 420 to 423 (YEGR) each bind substrate. The Proton acceptor role is filled by Asp-204.

Belongs to the phosphofructokinase type A (PFKA) family. PPi-dependent PFK group II subfamily. Clade 'Long' sub-subfamily. As to quaternary structure, homodimer. The cofactor is Mg(2+). It depends on Mn(2+) as a cofactor.

It localises to the cytoplasm. The catalysed reaction is beta-D-fructose 6-phosphate + diphosphate = beta-D-fructose 1,6-bisphosphate + phosphate + H(+). It functions in the pathway carbohydrate degradation; glycolysis; D-glyceraldehyde 3-phosphate and glycerone phosphate from D-glucose: step 3/4. Its activity is regulated as follows. Non-allosteric. Competitively inhibited by PPi, Pi and fructose 1,6-bisphosphate. In terms of biological role, catalyzes the phosphorylation of D-fructose 6-phosphate, the first committing step of glycolysis. Uses inorganic phosphate (PPi) as phosphoryl donor instead of ATP like common ATP-dependent phosphofructokinases (ATP-PFKs), which renders the reaction reversible, and can thus function both in glycolysis and gluconeogenesis. Consistently, PPi-PFK can replace the enzymes of both the forward (ATP-PFK) and reverse (fructose-bisphosphatase (FBPase)) reactions. The chain is Pyrophosphate--fructose 6-phosphate 1-phosphotransferase from Entamoeba histolytica (strain ATCC 30459 / HM-1:IMSS / ABRM).